The sequence spans 69 residues: Large ribosomal subunit protein uL29 (69 aa).

Belongs to the universal ribosomal protein uL29 family.

The chain is Large ribosomal subunit protein uL29 from Lachnoclostridium phytofermentans (strain ATCC 700394 / DSM 18823 / ISDg) (Clostridium phytofermentans).